A 132-amino-acid polypeptide reads, in one-letter code: DNA-entry nuclease inhibitor (132 aa).

This protein is a subunit of a 75 kDa protein complex, which governs binding and entry of donor DNA. The complex is a tetramer of two subunits of the DNA-entry nuclease and two subunits of a competence-specific protein. Only the complex is able to bind ds- and ss-DNA.

Its subcellular location is the cell membrane. Functionally, plays a role in the competence of cells to be transformed. It inhibits the activity of the DNA-entry nuclease. The sequence is that of DNA-entry nuclease inhibitor (nin) from Bacillus subtilis (strain 168).